The sequence spans 142 residues: Galactose-6-phosphate isomerase subunit LacA (142 aa).

The protein belongs to the LacAB/RpiB family. In terms of assembly, heteromultimeric protein consisting of LacA and LacB.

It carries out the reaction aldehydo-D-galactose 6-phosphate = keto-D-tagatose 6-phosphate. It functions in the pathway carbohydrate metabolism; D-galactose 6-phosphate degradation; D-tagatose 6-phosphate from D-galactose 6-phosphate: step 1/1. In Clostridium acetobutylicum (strain ATCC 824 / DSM 792 / JCM 1419 / IAM 19013 / LMG 5710 / NBRC 13948 / NRRL B-527 / VKM B-1787 / 2291 / W), this protein is Galactose-6-phosphate isomerase subunit LacA.